Here is a 241-residue protein sequence, read N- to C-terminus: ATP-dependent Clp protease ATP-binding subunit CLPT2, chloroplastic (241 aa).

Residues 1–75 (MAAHSSCNFA…PRRIHKSAIS (75 aa)) constitute a chloroplast transit peptide. Residues 91-237 (KPKWSWRAIK…ELESFASESG (147 aa)) enclose the Clp R domain. Repeat regions lie at residues 94 to 159 (WSWR…LGKA) and 171 to 237 (LTED…SESG).

The protein belongs to the ClpA/ClpB family. Monomer and homodimer. The dimers monomerize before association to the P-ring. Component of the chloroplastic Clp protease core complex which consist of at least 16 proteins: CLPP4 (3 copies), CLPP5 (3 copies), CLPR4 (2 copies), ClpP1 (1 copy), CLPP6 (1 copy), CLPR2 (1 copy), CLPT1 (1 copy), CLPT2 (1 copy) and 3 copies of CLPP3 and/or CLPR1 and/or CLPR3. Interacts with AHK2. Interacts with CPN21. No interactions with CLPS1.

The protein localises to the plastid. It is found in the chloroplast. Accessory protein regulating the assembly of the plastidial Clp protease system. CLPT1 first binds to the heptameric P-ring containing the CLP3-6 subunits followed by CLPT2, and only then does the P-ring combine with the R-ring composed of the clpP1 and CLPR1-4 subunits. Once the core complex is fully assembled, it then associates to the CLPC chaperone partner to form the functional protease. CLPT2 and CLPT1 are partially redundant. The sequence is that of ATP-dependent Clp protease ATP-binding subunit CLPT2, chloroplastic from Arabidopsis thaliana (Mouse-ear cress).